Reading from the N-terminus, the 427-residue chain is Glutamate-1-semialdehyde 2,1-aminomutase (427 aa).

K265 is modified (N6-(pyridoxal phosphate)lysine).

The protein belongs to the class-III pyridoxal-phosphate-dependent aminotransferase family. HemL subfamily. Homodimer. Pyridoxal 5'-phosphate serves as cofactor.

It is found in the cytoplasm. The catalysed reaction is (S)-4-amino-5-oxopentanoate = 5-aminolevulinate. It functions in the pathway porphyrin-containing compound metabolism; protoporphyrin-IX biosynthesis; 5-aminolevulinate from L-glutamyl-tRNA(Glu): step 2/2. The sequence is that of Glutamate-1-semialdehyde 2,1-aminomutase from Pseudomonas paraeruginosa (strain DSM 24068 / PA7) (Pseudomonas aeruginosa (strain PA7)).